A 183-amino-acid chain; its full sequence is Calmodulin-like protein 3 (183 aa).

4 EF-hand domains span residues 7–42 (EQIA…LGQS), 43–78 (PTEA…KLRD), 80–115 (GAED…LSDP), and 116–151 (LSDD…KRRQ). Ca(2+) contacts are provided by D20, D22, D24, T26, E31, D56, D58, S60, S62, E67, D93, D95, N97, E104, D129, D131, D133, Q135, and E140. Residues 154–183 (MEGHGSGGHRSSNSHKKSGCCGPNSSCTIL) form a disordered region. S-palmitoyl cysteine attachment occurs at residues C173 and C174. C180 carries the post-translational modification Cysteine methyl ester. C180 carries S-farnesyl cysteine lipidation. Residues 181-183 (TIL) constitute a propeptide, removed in mature form.

The protein belongs to the calmodulin family.

It localises to the membrane. Potential calcium sensor. This is Calmodulin-like protein 3 (CML3) from Oryza sativa subsp. japonica (Rice).